We begin with the raw amino-acid sequence, 121 residues long: Large ribosomal subunit protein uL22 (121 aa).

Belongs to the universal ribosomal protein uL22 family. Part of the 50S ribosomal subunit.

This protein binds specifically to 23S rRNA; its binding is stimulated by other ribosomal proteins, e.g. L4, L17, and L20. It is important during the early stages of 50S assembly. It makes multiple contacts with different domains of the 23S rRNA in the assembled 50S subunit and ribosome. In terms of biological role, the globular domain of the protein is located near the polypeptide exit tunnel on the outside of the subunit, while an extended beta-hairpin is found that lines the wall of the exit tunnel in the center of the 70S ribosome. The chain is Large ribosomal subunit protein uL22 from Hydrogenobaculum sp. (strain Y04AAS1).